A 662-amino-acid chain; its full sequence is tRNA 5-methylaminomethyl-2-thiouridine biosynthesis bifunctional protein MnmC (662 aa).

Residues 1–245 (MKQNAIQPAN…KREMLTGEMA (245 aa)) are tRNA (mnm(5)s(2)U34)-methyltransferase. Residues 270–662 (IGGGIASALL…RKLLKGKAVK (393 aa)) form an FAD-dependent cmnm(5)s(2)U34 oxidoreductase region.

The protein in the N-terminal section; belongs to the methyltransferase superfamily. tRNA (mnm(5)s(2)U34)-methyltransferase family. This sequence in the C-terminal section; belongs to the DAO family. It depends on FAD as a cofactor.

It is found in the cytoplasm. It carries out the reaction 5-aminomethyl-2-thiouridine(34) in tRNA + S-adenosyl-L-methionine = 5-methylaminomethyl-2-thiouridine(34) in tRNA + S-adenosyl-L-homocysteine + H(+). Functionally, catalyzes the last two steps in the biosynthesis of 5-methylaminomethyl-2-thiouridine (mnm(5)s(2)U) at the wobble position (U34) in tRNA. Catalyzes the FAD-dependent demodification of cmnm(5)s(2)U34 to nm(5)s(2)U34, followed by the transfer of a methyl group from S-adenosyl-L-methionine to nm(5)s(2)U34, to form mnm(5)s(2)U34. In Klebsiella pneumoniae subsp. pneumoniae (strain ATCC 700721 / MGH 78578), this protein is tRNA 5-methylaminomethyl-2-thiouridine biosynthesis bifunctional protein MnmC.